A 449-amino-acid polypeptide reads, in one-letter code: tRNA-2-methylthio-N(6)-dimethylallyladenosine synthase (449 aa).

Residues 7 to 124 enclose the MTTase N-terminal domain; the sequence is DAFYIHTFGC…LPLLIKQVQQ (118 aa). Residues Cys16, Cys52, Cys87, Cys163, Cys167, and Cys170 each coordinate [4Fe-4S] cluster. One can recognise a Radical SAM core domain in the interval 149 to 379; the sequence is RSSSMSAFVP…IECQNRISAS (231 aa). The region spanning 382–445 is the TRAM domain; sequence SQAVGSVVEV…SATLLGEPLI (64 aa).

The protein belongs to the methylthiotransferase family. MiaB subfamily. Monomer. Requires [4Fe-4S] cluster as cofactor.

The protein resides in the cytoplasm. It carries out the reaction N(6)-dimethylallyladenosine(37) in tRNA + (sulfur carrier)-SH + AH2 + 2 S-adenosyl-L-methionine = 2-methylsulfanyl-N(6)-dimethylallyladenosine(37) in tRNA + (sulfur carrier)-H + 5'-deoxyadenosine + L-methionine + A + S-adenosyl-L-homocysteine + 2 H(+). In terms of biological role, catalyzes the methylthiolation of N6-(dimethylallyl)adenosine (i(6)A), leading to the formation of 2-methylthio-N6-(dimethylallyl)adenosine (ms(2)i(6)A) at position 37 in tRNAs that read codons beginning with uridine. The sequence is that of tRNA-2-methylthio-N(6)-dimethylallyladenosine synthase from Chlorobium chlorochromatii (strain CaD3).